Here is a 49-residue protein sequence, read N- to C-terminus: Large ribosomal subunit protein eL40 (49 aa).

Belongs to the eukaryotic ribosomal protein eL40 family.

The sequence is that of Large ribosomal subunit protein eL40 from Methanopyrus kandleri (strain AV19 / DSM 6324 / JCM 9639 / NBRC 100938).